Consider the following 425-residue polypeptide: Serine--tRNA ligase (425 aa).

An L-serine-binding site is contributed by 233 to 235 (TAE). 264–266 (RRE) provides a ligand contact to ATP. An L-serine-binding site is contributed by glutamate 287. 351-354 (EISS) provides a ligand contact to ATP. Serine 387 serves as a coordination point for L-serine.

Belongs to the class-II aminoacyl-tRNA synthetase family. Type-1 seryl-tRNA synthetase subfamily. As to quaternary structure, homodimer. The tRNA molecule binds across the dimer.

The protein resides in the cytoplasm. It carries out the reaction tRNA(Ser) + L-serine + ATP = L-seryl-tRNA(Ser) + AMP + diphosphate + H(+). The catalysed reaction is tRNA(Sec) + L-serine + ATP = L-seryl-tRNA(Sec) + AMP + diphosphate + H(+). Its pathway is aminoacyl-tRNA biosynthesis; selenocysteinyl-tRNA(Sec) biosynthesis; L-seryl-tRNA(Sec) from L-serine and tRNA(Sec): step 1/1. Its function is as follows. Catalyzes the attachment of serine to tRNA(Ser). Is also able to aminoacylate tRNA(Sec) with serine, to form the misacylated tRNA L-seryl-tRNA(Sec), which will be further converted into selenocysteinyl-tRNA(Sec). The sequence is that of Serine--tRNA ligase from Thermotoga neapolitana (strain ATCC 49049 / DSM 4359 / NBRC 107923 / NS-E).